The primary structure comprises 757 residues: Large ribosomal subunit protein mL102 (rPPR5) (757 aa).

Polar residues predominate over residues 39 to 55 (EETQTPANANPETQSPD). Residues 39–82 (EETQTPANANPETQSPDAKSETKKNLTSTETRPLRERFQRGKRQ) form a disordered region. Residues 70-82 (RPLRERFQRGKRQ) show a composition bias toward basic and acidic residues. PPR repeat units lie at residues 149–183 (DRDT…GVPW), 184–218 (DEDM…GVER), 219–253 (TIKS…GVEP), 254–288 (TRHT…GISP), 289–323 (DDAT…KIGP), 324–358 (SVVS…GIEP), 359–393 (NATT…HIAP), 395–429 (DNSI…NVPA), 430–464 (EAGH…EIIL), 473–507 (EPSA…GVQD), 510–541 (ALNN…GVPR), 542–576 (ESNA…GHVP), 577–611 (DSSL…NVGI), 614–648 (NMDL…GHTA), 651–680 (DSLL…DLSL), and 681–715 (EFSS…GSST).

Belongs to the PPR family. P subfamily. In terms of assembly, component of the mitochondrial ribosome large subunit.

It localises to the mitochondrion. The protein is Large ribosomal subunit protein mL102 (rPPR5) of Arabidopsis thaliana (Mouse-ear cress).